Here is a 198-residue protein sequence, read N- to C-terminus: Large ribosomal subunit protein uL13B (198 aa).

The residue at position 2 (Ser2) is an N-acetylserine; partial. Ser43 bears the Phosphoserine mark. Lys176 is covalently cross-linked (Glycyl lysine isopeptide (Lys-Gly) (interchain with G-Cter in ubiquitin)). A phosphoserine mark is found at Ser181, Ser185, and Ser187.

Belongs to the universal ribosomal protein uL13 family. As to quaternary structure, component of the large ribosomal subunit (LSU). Mature yeast ribosomes consist of a small (40S) and a large (60S) subunit. The 40S small subunit contains 1 molecule of ribosomal RNA (18S rRNA) and 33 different proteins (encoded by 57 genes). The large 60S subunit contains 3 rRNA molecules (25S, 5.8S and 5S rRNA) and 46 different proteins (encoded by 81 genes). N-terminally acetylated by acetyltransferase NatA.

The protein resides in the cytoplasm. Its function is as follows. Component of the ribosome, a large ribonucleoprotein complex responsible for the synthesis of proteins in the cell. The small ribosomal subunit (SSU) binds messenger RNAs (mRNAs) and translates the encoded message by selecting cognate aminoacyl-transfer RNA (tRNA) molecules. The large subunit (LSU) contains the ribosomal catalytic site termed the peptidyl transferase center (PTC), which catalyzes the formation of peptide bonds, thereby polymerizing the amino acids delivered by tRNAs into a polypeptide chain. The nascent polypeptides leave the ribosome through a tunnel in the LSU and interact with protein factors that function in enzymatic processing, targeting, and the membrane insertion of nascent chains at the exit of the ribosomal tunnel. The sequence is that of Large ribosomal subunit protein uL13B from Saccharomyces cerevisiae (strain ATCC 204508 / S288c) (Baker's yeast).